The following is a 382-amino-acid chain: Alkanesulfonate monooxygenase (382 aa).

This sequence belongs to the SsuD family.

It catalyses the reaction an alkanesulfonate + FMNH2 + O2 = an aldehyde + FMN + sulfite + H2O + 2 H(+). Its function is as follows. Catalyzes the desulfonation of aliphatic sulfonates. The polypeptide is Alkanesulfonate monooxygenase (Pseudomonas entomophila (strain L48)).